Reading from the N-terminus, the 1755-residue chain is E3 ubiquitin-protein ligase UBR2 (1755 aa).

Residue Ala2 is modified to N-acetylalanine. Lys94 participates in a covalent cross-link: Glycyl lysine isopeptide (Lys-Gly) (interchain with G-Cter in ubiquitin). A UBR-type zinc finger spans residues 97–168; the sequence is HLCGRVFKVG…EGPYCQKHKL (72 aa). Residues Cys99, Cys112, Cys115, Cys124, Cys127, His133, and His136 each coordinate Zn(2+). An a peptide-binding site is contributed by Phe148. Cys149 is a Zn(2+) binding site. Residue Asp150 coordinates a peptide. Cys151 lines the Zn(2+) pocket. Position 153 (Asp153) interacts with a peptide. Residue Lys158 forms a Glycyl lysine isopeptide (Lys-Gly) (interchain with G-Cter in ubiquitin) linkage. Residue Cys163 participates in Zn(2+) binding. Residue Lys165 forms a Glycyl lysine isopeptide (Lys-Gly) (interchain with G-Cter in ubiquitin) linkage. His166 serves as a coordination point for Zn(2+). Glycyl lysine isopeptide (Lys-Gly) (interchain with G-Cter in ubiquitin) cross-links involve residues Lys248, Lys255, and Lys470. At Ser476 the chain carries Phosphoserine. Glycyl lysine isopeptide (Lys-Gly) (interchain with G-Cter in ubiquitin) cross-links involve residues Lys488, Lys568, Lys779, and Lys789. The interval 1012–1033 is disordered; it reads AEAEGTIMEESSRDKDKAERKR. Residues 1019–1054 are a coiled coil; sequence MEESSRDKDKAERKRKAEIARLRREKIMAQMSEMQR. Over residues 1021-1033 the composition is skewed to basic and acidic residues; sequence ESSRDKDKAERKR. Residues Cys1108, Cys1111, Cys1168, His1170, His1173, Cys1176, Cys1210, and Cys1213 each coordinate Zn(2+). Residues 1108 to 1214 form an RING-type; atypical zinc finger; it reads CILCQEEQEV…NGEFLCPLCE (107 aa). Residues Lys1496, Lys1599, and Lys1689 each participate in a glycyl lysine isopeptide (Lys-Gly) (interchain with G-Cter in ubiquitin) cross-link. Residue Ser1694 is modified to Phosphoserine. Residue Tyr1697 is modified to Phosphotyrosine.

The protein belongs to the E3 ubiquitin-protein ligase UBR1-like family. Interacts with UBE2B; promotes the UBE2B-H2A interaction and the ubiquitination of histone H2A by UBE2B and UBR2. Interacts with RECQL4. Interacts with Tex19.1 and Tex19.2; does not lead to Tex19.1 degradation and stabilizes it. Interacts with L1RE1. Interacts with CASP8. Interacts with ATXN3. Interacts with UBE2O. In terms of processing, dephosphorylated by DUSP22 at Ser-1694 and Tyr-1697, leading to subsequent ubiquitination and proteasomal degradation. 'Lys-48'-linked ubiquitinated at Lys-94, Lys-779 and Lys-1599 following DUSP22-mediated dephosphorylation of Ser-1694 and Tyr-1697 which promotes UBR2 interaction with the SCF(FBW1A) E3 ubiquitin-protein ligase complex. As to expression, highly expressed in skeletal muscle. Also expressed in heart, kidney and testis. Expressed in acinar cells of the pancreas. In testes, expressed primarily in spermatocytes. Expressed in cerebellum.

The protein resides in the nucleus. It localises to the chromosome. It catalyses the reaction S-ubiquitinyl-[E2 ubiquitin-conjugating enzyme]-L-cysteine + [acceptor protein]-L-lysine = [E2 ubiquitin-conjugating enzyme]-L-cysteine + N(6)-ubiquitinyl-[acceptor protein]-L-lysine.. It participates in protein modification; protein ubiquitination. Functionally, E3 ubiquitin-protein ligase which is a component of the N-end rule pathway. Recognizes and binds to proteins bearing specific N-terminal residues (N-degrons) that are destabilizing according to the N-end rule, leading to their ubiquitination and subsequent degradation. Recognizes both type-1 and type-2 N-degrons, containing positively charged amino acids (Arg, Lys and His) and bulky and hydrophobic amino acids, respectively. Does not ubiquitinate proteins that are acetylated at the N-terminus. In contrast, it strongly binds methylated N-degrons. Plays a critical role in chromatin inactivation and chromosome-wide transcriptional silencing during meiosis via ubiquitination of histone H2A. Binds leucine and is a negative regulator of the leucine-mTOR signaling pathway, thereby controlling cell growth. Required for spermatogenesis, promotes, with Tex19.1, SPO11-dependent recombination foci to accumulate and drive robust homologous chromosome synapsis. Polyubiquitinates LINE-1 retrotransposon encoded, LIRE1, which induces degradation, inhibiting LINE-1 retrotransposon mobilization. Catalyzes ubiquitination and degradation of the N-terminal part of NLRP1B following NLRP1B activation by pathogens and other damage-associated signals: ubiquitination promotes degradation of the N-terminal part and subsequent release of the cleaved C-terminal part of NLRP1B, which polymerizes and forms the NLRP1B inflammasome followed by host cell pyroptosis. Plays a role in T-cell receptor signaling by inducing 'Lys-63'-linked ubiquitination of lymphocyte cell-specific kinase LCK. This activity is regulated by DUSP22, which induces 'Lys-48'-linked ubiquitination of UBR2, leading to its proteasomal degradation by SCF E3 ubiquitin-protein ligase complex. The chain is E3 ubiquitin-protein ligase UBR2 from Mus musculus (Mouse).